A 313-amino-acid polypeptide reads, in one-letter code: Acetyl-coenzyme A carboxylase carboxyl transferase subunit beta (313 aa).

In terms of domain architecture, CoA carboxyltransferase N-terminal spans 24-293; the sequence is LWIKCPDSGQ…LETASKSVQP (270 aa).

This sequence belongs to the AccD/PCCB family. In terms of assembly, acetyl-CoA carboxylase is a heterohexamer composed of biotin carboxyl carrier protein (AccB), biotin carboxylase (AccC) and two subunits each of ACCase subunit alpha (AccA) and ACCase subunit beta (AccD).

The protein resides in the cytoplasm. It catalyses the reaction N(6)-carboxybiotinyl-L-lysyl-[protein] + acetyl-CoA = N(6)-biotinyl-L-lysyl-[protein] + malonyl-CoA. It participates in lipid metabolism; malonyl-CoA biosynthesis; malonyl-CoA from acetyl-CoA: step 1/1. In terms of biological role, component of the acetyl coenzyme A carboxylase (ACC) complex. Biotin carboxylase (BC) catalyzes the carboxylation of biotin on its carrier protein (BCCP) and then the CO(2) group is transferred by the transcarboxylase to acetyl-CoA to form malonyl-CoA. The chain is Acetyl-coenzyme A carboxylase carboxyl transferase subunit beta from Bradyrhizobium diazoefficiens (strain JCM 10833 / BCRC 13528 / IAM 13628 / NBRC 14792 / USDA 110).